Here is a 341-residue protein sequence, read N- to C-terminus: Platelet-activating factor receptor (341 aa).

Residues 1–16 lie on the Extracellular side of the membrane; sequence MEQNGSFRVDSEFRYT. Asn-4 carries N-linked (GlcNAc...) asparagine glycosylation. A helical transmembrane segment spans residues 17–38; it reads LFPIVYSVIFVLGVVANGYVLW. The Cytoplasmic segment spans residues 39–54; the sequence is VFATLYPSKKLNEIKI. Residues 55-74 traverse the membrane as a helical segment; that stretch reads FMVNLTVADLLFLMTLPLWI. Topologically, residues 75–91 are extracellular; sequence VYYSNEGDWIVHKFLCN. Cys-90 and Cys-173 are joined by a disulfide. Residues 92–113 traverse the membrane as a helical segment; sequence LAGCLFFINTYCSVAFLGVITY. At 114–133 the chain is on the cytoplasmic side; it reads NRYQAVAYPIKTAQATTRKR. The chain crosses the membrane as a helical span at residues 134 to 155; the sequence is GITLSLVIWISIAATASYFLAT. The Extracellular portion of the chain corresponds to 156 to 184; sequence DSTNVVPKKDGSGNITRCFEHYEPYSVPI. Asn-169 carries N-linked (GlcNAc...) asparagine glycosylation. The chain crosses the membrane as a helical span at residues 185–205; the sequence is LVVHIFITSCFFLVFFLIFYC. Over 206-233 the chain is Cytoplasmic; it reads NMVIIHTLLTRPVRQQRKPEVKRRALWM. The chain crosses the membrane as a helical span at residues 234–254; that stretch reads VCTVLAVFVICFVPHHVVQLP. Residues 255 to 275 are Extracellular-facing; sequence WTLAELGYQTNFHQAINDAHQ. Residues 276–295 form a helical membrane-spanning segment; the sequence is ITLCLLSTNCVLDPVIYCFL. Residues 296 to 341 lie on the Cytoplasmic side of the membrane; sequence TKKFRKHLSEKFYSMRSSRKCSRATSDTCTEVMMPANQTPVLPLKN.

This sequence belongs to the G-protein coupled receptor 1 family. In terms of assembly, interacts with ARRB1. Present in almost all organs including spleen, small intestine, kidney, lung, liver and brain.

The protein resides in the cell membrane. In terms of biological role, receptor for platelet activating factor, a chemotactic phospholipid mediator that possesses potent inflammatory, smooth-muscle contractile and hypotensive activity. Seems to mediate its action via a G protein that activates a phosphatidylinositol-calcium second messenger system. The chain is Platelet-activating factor receptor (Ptafr) from Rattus norvegicus (Rat).